The sequence spans 496 residues: uncharacterized protein (496 aa).

Mg(2+)-binding residues include aspartate 36, aspartate 81, glutamate 300, glutamate 302, aspartate 321, aspartate 323, and aspartate 375.

This sequence belongs to the XPG/RAD2 endonuclease family. FEN1 subfamily. Mg(2+) is required as a cofactor.

This is an uncharacterized protein from Schizosaccharomyces pombe (strain 972 / ATCC 24843) (Fission yeast).